Consider the following 596-residue polypeptide: Elongation factor 4 (596 aa).

Residues Lys-2 to Glu-184 enclose the tr-type G domain. Residues Asp-14–Thr-19 and Asn-131–Asp-134 contribute to the GTP site.

It belongs to the TRAFAC class translation factor GTPase superfamily. Classic translation factor GTPase family. LepA subfamily.

The protein localises to the cell inner membrane. It carries out the reaction GTP + H2O = GDP + phosphate + H(+). Its function is as follows. Required for accurate and efficient protein synthesis under certain stress conditions. May act as a fidelity factor of the translation reaction, by catalyzing a one-codon backward translocation of tRNAs on improperly translocated ribosomes. Back-translocation proceeds from a post-translocation (POST) complex to a pre-translocation (PRE) complex, thus giving elongation factor G a second chance to translocate the tRNAs correctly. Binds to ribosomes in a GTP-dependent manner. This chain is Elongation factor 4, found in Neorickettsia sennetsu (strain ATCC VR-367 / Miyayama) (Ehrlichia sennetsu).